The primary structure comprises 427 residues: Zinc-finger homeodomain protein 7 (427 aa).

Disordered stretches follow at residues 1 to 60 (MEYK…SLMD) and 91 to 118 (LHAA…QRHH). A compositionally biased stretch (acidic residues) spans 10–28 (EEEEEEEEEEDDEEEDEEE). Residues 50 to 60 (SSASSPSSLMD) show a composition bias toward low complexity. Residues 163 to 211 (YRECLKNHAARMGAHVLDGCGEFMSSPGDGAAALACAACGCHRSFHRRE) form a ZF-HD dimerization-type; degenerate zinc finger. 2 disordered regions span residues 264-320 (KRPP…SKKR) and 375-427 (HLAK…QHDA). Low complexity-rich tracts occupy residues 271-283 (VSPA…LAES) and 301-312 (HAAAVVAASASA). Residues 318 to 381 (KKRFRTKFTA…NNKHLAKTPP (64 aa)) constitute a DNA-binding region (homeobox). The segment covering 380–401 (PPSPTSQPPPPPLHHDPSPPPP) has biased composition (pro residues). Positions 402–416 (PHHHHHHHHHHHPPQ) are enriched in basic residues. Residues 417-427 (HHQQQQQQHDA) are compositionally biased toward low complexity.

In terms of assembly, homo- and heterodimer with other ZFHD proteins.

The protein localises to the nucleus. Its function is as follows. Putative transcription factor. In Oryza sativa subsp. japonica (Rice), this protein is Zinc-finger homeodomain protein 7 (ZHD7).